We begin with the raw amino-acid sequence, 131 residues long: Peptidyl-prolyl cis-trans isomerase NIMA-interacting 4 (131 aa).

The segment at 1–25 is necessary for nuclear localization and DNA-binding; the sequence is MPPKGKSGSGKGGKGKAASGSESSE. A disordered region spans residues 1–37; it reads MPPKGKSGSGKGGKGKAASGSESSEKKAQGPKGGGNA. The necessary for association with the pre-rRNP complexes stretch occupies residues 1–41; sequence MPPKGKSGSGKGGKGKAASGSESSEKKAQGPKGGGNAVKVR. S19 carries the post-translational modification Phosphoserine; by CK2. The PpiC domain maps to 35 to 129; sequence GNAVKVRHIL…FGYHIIMVEG (95 aa).

Belongs to the PpiC/parvulin rotamase family. PIN4 subfamily. Found in pre-ribosomal ribonucleoprotein (pre-rRNP) complexes. In terms of processing, phosphorylated. Phosphorylation occurs both in the nucleus and the cytoplasm. Phosphorylation at Ser-19 does not affect its PPIase activity but is required for nuclear localization, and the dephosphorylation is a prerequisite for the binding to DNA. The unphosphorylated form associates with the pre-rRNP complexes in the nucleus.

The protein resides in the nucleus. Its subcellular location is the nucleolus. It is found in the cytoplasm. The protein localises to the cytoskeleton. It localises to the spindle. The enzyme catalyses [protein]-peptidylproline (omega=180) = [protein]-peptidylproline (omega=0). In terms of biological role, involved as a ribosomal RNA processing factor in ribosome biogenesis. Binds to tightly bent AT-rich stretches of double-stranded DNA. This Bos taurus (Bovine) protein is Peptidyl-prolyl cis-trans isomerase NIMA-interacting 4 (PIN4).